We begin with the raw amino-acid sequence, 338 residues long: Phosphate acyltransferase (338 aa).

The protein belongs to the PlsX family. In terms of assembly, homodimer. Probably interacts with PlsY.

It localises to the cytoplasm. It catalyses the reaction a fatty acyl-[ACP] + phosphate = an acyl phosphate + holo-[ACP]. It functions in the pathway lipid metabolism; phospholipid metabolism. In terms of biological role, catalyzes the reversible formation of acyl-phosphate (acyl-PO(4)) from acyl-[acyl-carrier-protein] (acyl-ACP). This enzyme utilizes acyl-ACP as fatty acyl donor, but not acyl-CoA. The protein is Phosphate acyltransferase of Gloeobacter violaceus (strain ATCC 29082 / PCC 7421).